We begin with the raw amino-acid sequence, 109 residues long: Class I hydrophobin 18 (109 aa).

The signal sequence occupies residues 1–20 (MFTEQVLNVIILLQTATVTA). 4 cysteine pairs are disulfide-bonded: Cys28/Cys88, Cys35/Cys82, Cys36/Cys69, and Cys89/Cys102. N-linked (GlcNAc...) asparagine glycans are attached at residues Asn91 and Asn106.

It belongs to the fungal hydrophobin family. As to quaternary structure, self-assembles to form functional amyloid fibrils called rodlets. Self-assembly into fibrillar rodlets occurs spontaneously at hydrophobic:hydrophilic interfaces and the rodlets further associate laterally to form amphipathic monolayers.

It localises to the secreted. It is found in the cell wall. Its function is as follows. Aerial growth, conidiation, and dispersal of filamentous fungi in the environment rely upon a capability of their secreting small amphipathic proteins called hydrophobins (HPBs) with low sequence identity. Class I can self-assemble into an outermost layer of rodlet bundles on aerial cell surfaces, conferring cellular hydrophobicity that supports fungal growth, development and dispersal; whereas Class II form highly ordered films at water-air interfaces through intermolecular interactions but contribute nothing to the rodlet structure. This is Class I hydrophobin 18 from Pleurotus ostreatus (strain PC15) (Oyster mushroom).